Consider the following 415-residue polypeptide: Gamma-glutamyl phosphate reductase (415 aa).

Belongs to the gamma-glutamyl phosphate reductase family.

Its subcellular location is the cytoplasm. It catalyses the reaction L-glutamate 5-semialdehyde + phosphate + NADP(+) = L-glutamyl 5-phosphate + NADPH + H(+). It participates in amino-acid biosynthesis; L-proline biosynthesis; L-glutamate 5-semialdehyde from L-glutamate: step 2/2. Catalyzes the NADPH-dependent reduction of L-glutamate 5-phosphate into L-glutamate 5-semialdehyde and phosphate. The product spontaneously undergoes cyclization to form 1-pyrroline-5-carboxylate. The sequence is that of Gamma-glutamyl phosphate reductase from Thermotoga sp. (strain RQ2).